The sequence spans 183 residues: ATP-dependent protease subunit HslV (183 aa).

The active site involves threonine 7. Residues glycine 162, cysteine 165, and threonine 168 each coordinate Na(+).

Belongs to the peptidase T1B family. HslV subfamily. In terms of assembly, a double ring-shaped homohexamer of HslV is capped on each side by a ring-shaped HslU homohexamer. The assembly of the HslU/HslV complex is dependent on binding of ATP.

The protein localises to the cytoplasm. It carries out the reaction ATP-dependent cleavage of peptide bonds with broad specificity.. Its activity is regulated as follows. Allosterically activated by HslU binding. In terms of biological role, protease subunit of a proteasome-like degradation complex believed to be a general protein degrading machinery. The protein is ATP-dependent protease subunit HslV of Chromobacterium violaceum (strain ATCC 12472 / DSM 30191 / JCM 1249 / CCUG 213 / NBRC 12614 / NCIMB 9131 / NCTC 9757 / MK).